Here is a 121-residue protein sequence, read N- to C-terminus: Holo-[acyl-carrier-protein] synthase (121 aa).

Mg(2+)-binding residues include Asp-5 and Glu-50.

Belongs to the P-Pant transferase superfamily. AcpS family. The cofactor is Mg(2+).

It is found in the cytoplasm. The enzyme catalyses apo-[ACP] + CoA = holo-[ACP] + adenosine 3',5'-bisphosphate + H(+). Its function is as follows. Transfers the 4'-phosphopantetheine moiety from coenzyme A to a Ser of acyl-carrier-protein. This Sulfurimonas denitrificans (strain ATCC 33889 / DSM 1251) (Thiomicrospira denitrificans (strain ATCC 33889 / DSM 1251)) protein is Holo-[acyl-carrier-protein] synthase.